The following is a 177-amino-acid chain: Adenine phosphoribosyltransferase (177 aa).

Belongs to the purine/pyrimidine phosphoribosyltransferase family. As to quaternary structure, homodimer.

Its subcellular location is the cytoplasm. It carries out the reaction AMP + diphosphate = 5-phospho-alpha-D-ribose 1-diphosphate + adenine. It participates in purine metabolism; AMP biosynthesis via salvage pathway; AMP from adenine: step 1/1. Catalyzes a salvage reaction resulting in the formation of AMP, that is energically less costly than de novo synthesis. This Chlorobium chlorochromatii (strain CaD3) protein is Adenine phosphoribosyltransferase.